Reading from the N-terminus, the 250-residue chain is MAAPTVSMQALLDAGAHFGHQTHRWNPKMKPYLFGDRNGIHIIDLSQTVPLMARALDLISQTVQHGGKVLFVGTKRQAQEPIAEAARRSGQHYVNHRWLGGMLTNWKTISNSIKRFKALEEQLSGDTHGLTKKEVLQLTRERDKFELSLGGIRDMGGIPDVMFVIDANKEELAIKEANTLGIPVVAILDSNVSPDGIAFPVPANDDAARAIRLYCEAVAEAATRGAQGGRQARGEDLGAAVEAPSEDALA.

The interval 225–250 is disordered; it reads GAQGGRQARGEDLGAAVEAPSEDALA.

It belongs to the universal ribosomal protein uS2 family.

The polypeptide is Small ribosomal subunit protein uS2 (Rhizorhabdus wittichii (strain DSM 6014 / CCUG 31198 / JCM 15750 / NBRC 105917 / EY 4224 / RW1) (Sphingomonas wittichii)).